Reading from the N-terminus, the 79-residue chain is U-myrmeciitoxin(01)-Mg9a (79 aa).

Residues 1-21 form the signal peptide; the sequence is MKLSCLLLTLAIIFVLTIVHA. Residues 22 to 48 constitute a propeptide that is removed on maturation; sequence PNVEAKALANPESDAIGFADAVGEADP. Position 78 is a glutamine amide (Q78).

In terms of tissue distribution, expressed by the venom gland.

The protein resides in the secreted. May have antimicrobial properties, like most ant linear peptides. The chain is U-myrmeciitoxin(01)-Mg9a from Myrmecia gulosa (Red bulldog ant).